Here is a 207-residue protein sequence, read N- to C-terminus: MPKYNLINQKGDFLSQIDLDDEIFGISINKQVLYDVVNAQRASMRQGTHATKNRALVSGGGKKPWRQKGTGRARHGTIRSPLWRGGGVAFGPSPRDYSVKVNQKVRRLALKMALSWKINNKNLILIDNINLETHKTKEFQNILDQLNIQQKTLILTKDLNHNLCLSIRNLSKVLLETVSHVSVYQLLSYSTIILTKEAANYFEENLK.

Positions 55 to 76 (ALVSGGGKKPWRQKGTGRARHG) are disordered. Over residues 63 to 76 (KPWRQKGTGRARHG) the composition is skewed to basic residues.

It belongs to the universal ribosomal protein uL4 family. Part of the 50S ribosomal subunit.

One of the primary rRNA binding proteins, this protein initially binds near the 5'-end of the 23S rRNA. It is important during the early stages of 50S assembly. It makes multiple contacts with different domains of the 23S rRNA in the assembled 50S subunit and ribosome. In terms of biological role, forms part of the polypeptide exit tunnel. The chain is Large ribosomal subunit protein uL4 from Phytoplasma mali (strain AT).